We begin with the raw amino-acid sequence, 146 residues long: Large-conductance mechanosensitive channel (146 aa).

3 helical membrane-spanning segments follow: residues 17-37 (IDLA…DSLV), 40-60 (IIMP…QKFV), and 89-109 (LTIL…VKLI).

The protein belongs to the MscL family. In terms of assembly, homopentamer.

It localises to the cell inner membrane. Channel that opens in response to stretch forces in the membrane lipid bilayer. May participate in the regulation of osmotic pressure changes within the cell. The protein is Large-conductance mechanosensitive channel of Acinetobacter baylyi (strain ATCC 33305 / BD413 / ADP1).